The chain runs to 253 residues: Indole-3-glycerol phosphate synthase (253 aa).

The protein belongs to the TrpC family.

It carries out the reaction 1-(2-carboxyphenylamino)-1-deoxy-D-ribulose 5-phosphate + H(+) = (1S,2R)-1-C-(indol-3-yl)glycerol 3-phosphate + CO2 + H2O. Its pathway is amino-acid biosynthesis; L-tryptophan biosynthesis; L-tryptophan from chorismate: step 4/5. The chain is Indole-3-glycerol phosphate synthase from Bacillus anthracis (strain A0248).